The sequence spans 352 residues: UDP-N-acetylglucosamine--N-acetylmuramyl-(pentapeptide) pyrophosphoryl-undecaprenol N-acetylglucosamine transferase (352 aa).

UDP-N-acetyl-alpha-D-glucosamine-binding positions include 14-16 (TGG), Asn124, Arg164, Ser185, and Gln285.

The protein belongs to the glycosyltransferase 28 family. MurG subfamily.

It is found in the cell inner membrane. The catalysed reaction is di-trans,octa-cis-undecaprenyl diphospho-N-acetyl-alpha-D-muramoyl-L-alanyl-D-glutamyl-meso-2,6-diaminopimeloyl-D-alanyl-D-alanine + UDP-N-acetyl-alpha-D-glucosamine = di-trans,octa-cis-undecaprenyl diphospho-[N-acetyl-alpha-D-glucosaminyl-(1-&gt;4)]-N-acetyl-alpha-D-muramoyl-L-alanyl-D-glutamyl-meso-2,6-diaminopimeloyl-D-alanyl-D-alanine + UDP + H(+). It participates in cell wall biogenesis; peptidoglycan biosynthesis. Cell wall formation. Catalyzes the transfer of a GlcNAc subunit on undecaprenyl-pyrophosphoryl-MurNAc-pentapeptide (lipid intermediate I) to form undecaprenyl-pyrophosphoryl-MurNAc-(pentapeptide)GlcNAc (lipid intermediate II). This is UDP-N-acetylglucosamine--N-acetylmuramyl-(pentapeptide) pyrophosphoryl-undecaprenol N-acetylglucosamine transferase from Chlamydia trachomatis serovar A (strain ATCC VR-571B / DSM 19440 / HAR-13).